Consider the following 150-residue polypeptide: Small ribosomal subunit protein eS19 (150 aa).

Belongs to the eukaryotic ribosomal protein eS19 family. In terms of assembly, part of the 30S ribosomal subunit.

May be involved in maturation of the 30S ribosomal subunit. This chain is Small ribosomal subunit protein eS19, found in Thermoplasma volcanium (strain ATCC 51530 / DSM 4299 / JCM 9571 / NBRC 15438 / GSS1).